We begin with the raw amino-acid sequence, 197 residues long: Adenylyl-sulfate kinase (197 aa).

An ATP-binding site is contributed by 31–38; it reads GLSGAGKS. Ser105 serves as the catalytic Phosphoserine intermediate.

This sequence belongs to the APS kinase family.

It carries out the reaction adenosine 5'-phosphosulfate + ATP = 3'-phosphoadenylyl sulfate + ADP + H(+). It functions in the pathway sulfur metabolism; hydrogen sulfide biosynthesis; sulfite from sulfate: step 2/3. Functionally, catalyzes the synthesis of activated sulfate. The polypeptide is Adenylyl-sulfate kinase (Aeromonas hydrophila subsp. hydrophila (strain ATCC 7966 / DSM 30187 / BCRC 13018 / CCUG 14551 / JCM 1027 / KCTC 2358 / NCIMB 9240 / NCTC 8049)).